A 401-amino-acid chain; its full sequence is 4-hydroxy-3-methylbut-2-en-1-yl diphosphate synthase (ferredoxin) (401 aa).

[4Fe-4S] cluster is bound by residues Cys-306, Cys-309, Cys-340, and Glu-347.

This sequence belongs to the IspG family. It depends on [4Fe-4S] cluster as a cofactor.

It carries out the reaction (2E)-4-hydroxy-3-methylbut-2-enyl diphosphate + 2 oxidized [2Fe-2S]-[ferredoxin] + H2O = 2-C-methyl-D-erythritol 2,4-cyclic diphosphate + 2 reduced [2Fe-2S]-[ferredoxin] + H(+). The protein operates within isoprenoid biosynthesis; isopentenyl diphosphate biosynthesis via DXP pathway; isopentenyl diphosphate from 1-deoxy-D-xylulose 5-phosphate: step 5/6. Functionally, converts 2C-methyl-D-erythritol 2,4-cyclodiphosphate (ME-2,4cPP) into 1-hydroxy-2-methyl-2-(E)-butenyl 4-diphosphate. The chain is 4-hydroxy-3-methylbut-2-en-1-yl diphosphate synthase (ferredoxin) from Synechococcus sp. (strain CC9902).